The chain runs to 123 residues: Putative acidic leucine-rich nuclear phosphoprotein 32 family member C (123 aa).

LRR repeat units lie at residues 43-64 (ELEF…PKLN), 65-87 (KLKK…AEKC), 89-110 (NLKH…ELLK), and 114-123 (NLKSLDLFNC).

The protein belongs to the ANP32 family.

The protein is Putative acidic leucine-rich nuclear phosphoprotein 32 family member C (Anp32c) of Mus musculus (Mouse).